The following is a 601-amino-acid chain: 3-hydroxy-3-methylglutaryl-coenzyme A reductase (601 aa).

The disordered stretch occupies residues 1 to 34 (MDSRRRSPTVTAKAAAGELPLAPHEGQNQQPSIP). Helical transmembrane passes span 36–58 (SSDV…FFSV) and 86–106 (ALAS…LDFV). The linker stretch occupies residues 107 to 179 (QSLIYKPNNE…PLITPQNSEE (73 aa)). Positions 180–601 (DEDIIKAVVA…IASSQLESDS (422 aa)) are catalytic. The Charge relay system role is filled by E273. An N-linked (GlcNAc...) asparagine glycan is attached at N337. Active-site charge relay system residues include K405 and D481. The active-site Proton donor is the H579. N-linked (GlcNAc...) asparagine glycosylation is present at N583.

Belongs to the HMG-CoA reductase family.

Its subcellular location is the endoplasmic reticulum membrane. It carries out the reaction (R)-mevalonate + 2 NADP(+) + CoA = (3S)-3-hydroxy-3-methylglutaryl-CoA + 2 NADPH + 2 H(+). Its pathway is metabolic intermediate biosynthesis; (R)-mevalonate biosynthesis; (R)-mevalonate from acetyl-CoA: step 3/3. Catalyzes the synthesis of mevalonate. The specific precursor of all isoprenoid compounds present in plants. This is 3-hydroxy-3-methylglutaryl-coenzyme A reductase (HMGR) from Catharanthus roseus (Madagascar periwinkle).